Reading from the N-terminus, the 115-residue chain is Large ribosomal subunit protein uL24 (115 aa).

Belongs to the universal ribosomal protein uL24 family. In terms of assembly, part of the 50S ribosomal subunit.

In terms of biological role, one of two assembly initiator proteins, it binds directly to the 5'-end of the 23S rRNA, where it nucleates assembly of the 50S subunit. One of the proteins that surrounds the polypeptide exit tunnel on the outside of the subunit. The polypeptide is Large ribosomal subunit protein uL24 (Synechocystis sp. (strain ATCC 27184 / PCC 6803 / Kazusa)).